A 403-amino-acid chain; its full sequence is Phosphopentomutase (403 aa).

Mn(2+) is bound by residues D13, D298, H303, D339, H340, and H351.

Belongs to the phosphopentomutase family. Mn(2+) serves as cofactor.

The protein resides in the cytoplasm. The catalysed reaction is 2-deoxy-alpha-D-ribose 1-phosphate = 2-deoxy-D-ribose 5-phosphate. It catalyses the reaction alpha-D-ribose 1-phosphate = D-ribose 5-phosphate. It functions in the pathway carbohydrate degradation; 2-deoxy-D-ribose 1-phosphate degradation; D-glyceraldehyde 3-phosphate and acetaldehyde from 2-deoxy-alpha-D-ribose 1-phosphate: step 1/2. Isomerase that catalyzes the conversion of deoxy-ribose 1-phosphate (dRib-1-P) and ribose 1-phosphate (Rib-1-P) to deoxy-ribose 5-phosphate (dRib-5-P) and ribose 5-phosphate (Rib-5-P), respectively. The sequence is that of Phosphopentomutase from Streptococcus pneumoniae serotype 4 (strain ATCC BAA-334 / TIGR4).